Consider the following 249-residue polypeptide: Triosephosphate isomerase (249 aa).

Positions 12 and 14 each coordinate substrate. Lysine 14 bears the N6-acetyllysine mark. Tyrosine 68 is modified (3'-nitrotyrosine). A phosphoserine mark is found at serine 80 and serine 106. Lysine 142 participates in a covalent cross-link: Glycyl lysine isopeptide (Lys-Gly) (interchain with G-Cter in SUMO1). Lysine 149 bears the N6-succinyllysine mark. Residue lysine 156 is modified to N6-acetyllysine; alternate. Lysine 156 bears the N6-succinyllysine; alternate mark. Serine 159 bears the Phosphoserine mark. Residue glutamate 166 is the Proton acceptor of the active site. The residue at position 173 (threonine 173) is a Phosphothreonine. The residue at position 194 (lysine 194) is an N6-acetyllysine; alternate. Lysine 194 carries the N6-succinyllysine; alternate modification. Lysine 194 is subject to N6-methyllysine; alternate. A Phosphoserine modification is found at serine 198. The residue at position 209 (tyrosine 209) is a 3'-nitrotyrosine. Position 212 is a phosphoserine (serine 212). Phosphothreonine is present on threonine 214. Phosphoserine is present on serine 223. Lysine 238 bears the N6-acetyllysine mark.

Belongs to the triosephosphate isomerase family. In terms of assembly, homodimer.

The protein localises to the cytoplasm. The enzyme catalyses D-glyceraldehyde 3-phosphate = dihydroxyacetone phosphate. The catalysed reaction is dihydroxyacetone phosphate = methylglyoxal + phosphate. Its pathway is carbohydrate biosynthesis; gluconeogenesis. It participates in carbohydrate degradation; glycolysis; D-glyceraldehyde 3-phosphate from glycerone phosphate: step 1/1. Its function is as follows. Triosephosphate isomerase is an extremely efficient metabolic enzyme that catalyzes the interconversion between dihydroxyacetone phosphate (DHAP) and D-glyceraldehyde-3-phosphate (G3P) in glycolysis and gluconeogenesis. It is also responsible for the non-negligible production of methylglyoxal a reactive cytotoxic side-product that modifies and can alter proteins, DNA and lipids. This Mesocricetus auratus (Golden hamster) protein is Triosephosphate isomerase.